A 742-amino-acid chain; its full sequence is 5-methyltetrahydropteroyltriglutamate--homocysteine methyltransferase (742 aa).

5-methyltetrahydropteroyltri-L-glutamate-binding positions include 18–21 (REWK) and Lys112. Residues 420 to 422 (IGS) and Glu473 contribute to the L-homocysteine site. L-methionine is bound by residues 420–422 (IGS) and Glu473. 5-methyltetrahydropteroyltri-L-glutamate is bound at residue Trp550. Asp588 provides a ligand contact to L-homocysteine. Asp588 is an L-methionine binding site. Glu594 is a 5-methyltetrahydropteroyltri-L-glutamate binding site. Zn(2+) is bound by residues His630, Cys632, and Glu654. Catalysis depends on His683, which acts as the Proton donor. Cys715 lines the Zn(2+) pocket.

It belongs to the vitamin-B12 independent methionine synthase family. Zn(2+) serves as cofactor.

It catalyses the reaction 5-methyltetrahydropteroyltri-L-glutamate + L-homocysteine = tetrahydropteroyltri-L-glutamate + L-methionine. It functions in the pathway amino-acid biosynthesis; L-methionine biosynthesis via de novo pathway; L-methionine from L-homocysteine (MetE route): step 1/1. In terms of biological role, catalyzes the transfer of a methyl group from 5-methyltetrahydrofolate to homocysteine resulting in methionine formation. The protein is 5-methyltetrahydropteroyltriglutamate--homocysteine methyltransferase of Staphylococcus aureus (strain MRSA252).